Reading from the N-terminus, the 358-residue chain is Neutral protease 2 homolog PADG_00776 (358 aa).

An N-terminal signal peptide occupies residues 1-19 (MRRVSGILAVAAFTISAFA). Residues 20–185 (GVIQPVAKDA…MNQFVKIAKL (166 aa)) constitute a propeptide that is removed on maturation. 2 cysteine pairs are disulfide-bonded: Cys188/Cys259 and Cys266/Cys284. Asn249 carries N-linked (GlcNAc...) asparagine glycosylation. A Zn(2+)-binding site is contributed by His309. Glu310 is an active-site residue. Zn(2+) contacts are provided by His313 and Asp324.

This sequence belongs to the peptidase M35 family. It depends on Zn(2+) as a cofactor.

Its subcellular location is the secreted. It carries out the reaction Preferential cleavage of bonds with hydrophobic residues in P1'. Also 3-Asn-|-Gln-4 and 8-Gly-|-Ser-9 bonds in insulin B chain.. Its function is as follows. Secreted metalloproteinase that allows assimilation of proteinaceous substrates. Shows high activities on basic nuclear substrates such as histone and protamine. The polypeptide is Neutral protease 2 homolog PADG_00776 (Paracoccidioides brasiliensis (strain Pb18)).